A 931-amino-acid polypeptide reads, in one-letter code: Dipeptidyl aminopeptidase A (931 aa).

The span at 1–13 (MSASTHSHKRKNS) shows a compositional bias: basic residues. Positions 1-58 (MSASTHSHKRKNSHLFPQRKSSNSSMDKPFFPNNDSVANTDPQSNENGHTINEIRPTE) are disordered. The Cytoplasmic segment spans residues 1 to 119 (MSASTHSHKR…GEWSLPEKRS (119 aa)). Polar residues predominate over residues 33-50 (NNDSVANTDPQSNENGHT). The chain crosses the membrane as a helical; Signal-anchor for type II membrane protein span at residues 120 to 140 (YVLVFTLIALSVLVLLVILIP). The Lumenal portion of the chain corresponds to 141–931 (SKLLPTKITR…RFDNTEVLHL (791 aa)). N-linked (GlcNAc...) asparagine glycosylation is present at Asn-377. The active-site Charge relay system is Ser-785. Asn-814 carries N-linked (GlcNAc...) asparagine glycosylation. Residues Asp-863 and His-896 each act as charge relay system in the active site.

It belongs to the peptidase S9B family.

It is found in the vacuole membrane. Responsible for the proteolytic maturation of the alpha-factor precursor. The chain is Dipeptidyl aminopeptidase A (STE13) from Saccharomyces cerevisiae (strain ATCC 204508 / S288c) (Baker's yeast).